The primary structure comprises 371 residues: Putative RING finger protein ORF117 (371 aa).

The RING-type zinc-finger motif lies at 72–108 (CCICFRKDVIYKEVPCGHYICVECYKEPIRNVCPECN). Over residues 178-192 (EEEMNESEAEEEEPV) the composition is skewed to acidic residues. The tract at residues 178 to 218 (EEEMNESEAEEEEPVPEIAQFEALNTPPPPPTNRRPKIRRP) is disordered.

The chain is Putative RING finger protein ORF117 from Magallana gigas (Pacific oyster).